The sequence spans 539 residues: Chaperonin GroEL (539 aa).

ATP is bound by residues 29–32, 86–90, G413, 479–481, and D495; these read TLGP, DGTTT, and DAL.

It belongs to the chaperonin (HSP60) family. As to quaternary structure, forms a cylinder of 14 subunits composed of two heptameric rings stacked back-to-back. Interacts with the co-chaperonin GroES.

It is found in the cytoplasm. It carries out the reaction ATP + H2O + a folded polypeptide = ADP + phosphate + an unfolded polypeptide.. Together with its co-chaperonin GroES, plays an essential role in assisting protein folding. The GroEL-GroES system forms a nano-cage that allows encapsulation of the non-native substrate proteins and provides a physical environment optimized to promote and accelerate protein folding. In Pseudothermotoga lettingae (strain ATCC BAA-301 / DSM 14385 / NBRC 107922 / TMO) (Thermotoga lettingae), this protein is Chaperonin GroEL.